Here is an 86-residue protein sequence, read N- to C-terminus: uncharacterized protein (86 aa).

2 helical membrane-spanning segments follow: residues 20-38 (IQFWGFVAATGVLLYSVYL) and 47-63 (FSTFLFACVGTAATKGV). The disordered stretch occupies residues 67-86 (LSQRREQGKEQGREQGREQE). The span at 69-86 (QRREQGKEQGREQGREQE) shows a compositional bias: basic and acidic residues.

Its subcellular location is the cell membrane. This is an uncharacterized protein from Haemophilus influenzae (strain ATCC 51907 / DSM 11121 / KW20 / Rd).